Here is a 553-residue protein sequence, read N- to C-terminus: MRSDTITQGFERTPHRALLKGSGVPQSQMDKPFIGVATSFTDLIPGHVGMRDLERFIEKGVHTGGGHAFFFGLPGVCDGIAMGHKGMHYSLPTRELIADMVESVAEAHRLDGLVLLTNCDKITPGMLMAAARLDIPCIVVTAGPMMSGRGQEGRKFSFVTDTFEAMARYKAGVISERELMVCEENACPGIGSCQGLFTANTMAILTETMGMSLPRCGTALAVSALKRRIAFASGEKIVELVQNNITPRSILTREAFENAIRVDLALGGSSNTVLHLLAIANEAGVELPLETFDILAKETPQLASMNPAGEHFMEDLDVAGGVSGVMKQLGDKIKDTQTLFGLTTRQLAASVENVDETVIRPLTNPVKKEGGIAVLFGNIAPKGAVVKQSGVSDKMMKFEGTARCFDSEELAMAALMEGEIVAGNVVVIRYEGPKGGPGMREMLAPTAALMGLGLGDSVALITDGRFSGGTRGPCIGHISPEAAQGGPIGLIQDGDRISLDIPARRLELLVDEAVLQARAATWVAPPPKIAKGWLARYAKVVTSAHTGAVTTAE.

Asp78 serves as a coordination point for Mg(2+). Cys119 is a [2Fe-2S] cluster binding site. Mg(2+) contacts are provided by Asp120 and Lys121. N6-carboxylysine is present on Lys121. Position 193 (Cys193) interacts with [2Fe-2S] cluster. Glu441 lines the Mg(2+) pocket. Catalysis depends on Ser467, which acts as the Proton acceptor.

It belongs to the IlvD/Edd family. As to quaternary structure, homodimer. It depends on [2Fe-2S] cluster as a cofactor. The cofactor is Mg(2+).

It carries out the reaction (2R)-2,3-dihydroxy-3-methylbutanoate = 3-methyl-2-oxobutanoate + H2O. The catalysed reaction is (2R,3R)-2,3-dihydroxy-3-methylpentanoate = (S)-3-methyl-2-oxopentanoate + H2O. It functions in the pathway amino-acid biosynthesis; L-isoleucine biosynthesis; L-isoleucine from 2-oxobutanoate: step 3/4. Its pathway is amino-acid biosynthesis; L-valine biosynthesis; L-valine from pyruvate: step 3/4. Its function is as follows. Functions in the biosynthesis of branched-chain amino acids. Catalyzes the dehydration of (2R,3R)-2,3-dihydroxy-3-methylpentanoate (2,3-dihydroxy-3-methylvalerate) into 2-oxo-3-methylpentanoate (2-oxo-3-methylvalerate) and of (2R)-2,3-dihydroxy-3-methylbutanoate (2,3-dihydroxyisovalerate) into 2-oxo-3-methylbutanoate (2-oxoisovalerate), the penultimate precursor to L-isoleucine and L-valine, respectively. The polypeptide is Dihydroxy-acid dehydratase (Pelobacter propionicus (strain DSM 2379 / NBRC 103807 / OttBd1)).